The chain runs to 638 residues: 1-deoxy-D-xylulose-5-phosphate synthase (638 aa).

Residues H72 and 113–115 (GHA) each bind thiamine diphosphate. Residue D144 coordinates Mg(2+). Thiamine diphosphate contacts are provided by residues 145–146 (GA), N174, Y287, and E370. Residue N174 participates in Mg(2+) binding.

It belongs to the transketolase family. DXPS subfamily. Homodimer. It depends on Mg(2+) as a cofactor. Thiamine diphosphate is required as a cofactor.

The catalysed reaction is D-glyceraldehyde 3-phosphate + pyruvate + H(+) = 1-deoxy-D-xylulose 5-phosphate + CO2. It participates in metabolic intermediate biosynthesis; 1-deoxy-D-xylulose 5-phosphate biosynthesis; 1-deoxy-D-xylulose 5-phosphate from D-glyceraldehyde 3-phosphate and pyruvate: step 1/1. In terms of biological role, catalyzes the acyloin condensation reaction between C atoms 2 and 3 of pyruvate and glyceraldehyde 3-phosphate to yield 1-deoxy-D-xylulose-5-phosphate (DXP). This is 1-deoxy-D-xylulose-5-phosphate synthase from Picosynechococcus sp. (strain ATCC 27264 / PCC 7002 / PR-6) (Agmenellum quadruplicatum).